The sequence spans 75 residues: U6-lycotoxin-Ls1d (75 aa).

The N-terminal stretch at 1-21 is a signal peptide; it reads MKLLFFTALVLVVISLIEVEA. The propeptide occupies 22–25; that stretch reads ENER.

It belongs to the neurotoxin 19 (CSTX) family. 06 (U6-Lctx) subfamily. Contains 4 disulfide bonds. In terms of tissue distribution, expressed by the venom gland.

It is found in the secreted. The polypeptide is U6-lycotoxin-Ls1d (Lycosa singoriensis (Wolf spider)).